The chain runs to 600 residues: Lamin-B2 (600 aa).

Residues 2–27 form a head region; sequence SGTPIRGTPGGTPLSPTRISRLQEKE. Ser-16 bears the Phosphoserine; by CDK1 mark. Residues 25 to 381 enclose the IF rod domain; that stretch reads EKEELRQLND…KLLEGEEERL (357 aa). Residues 28-64 are coil 1A; sequence ELRQLNDRLAVYIDRVRALELENDRLLVKISEKEEVT. A coil 1B region spans residues 75 to 212; sequence YESELADARR…NVFEEEIRET (138 aa). Residues 237–379 form a coil 2 region; it reads QALEDLRNQH…YRKLLEGEEE (143 aa). 2 disordered regions span residues 377 to 449 and 568 to 600; these read EEER…QMSQ and ENEE…CLVM. Positions 380–600 are tail; that stretch reads RLKLSPSPSS…RTTSRGCLVM (221 aa). Over residues 383–410 the composition is skewed to low complexity; it reads LSPSPSSRVTVSRATSSSSSSSTSLVRS. Position 386 is a phosphoserine (Ser-386). A Nuclear localization signal motif is present at residues 414 to 419; sequence KRRRIE. Residues 445-562 enclose the LTD domain; it reads FQMSQQASAT…EEVAVRTVTK (118 aa). Residues 569–583 are compositionally biased toward acidic residues; sequence NEEEEDEADFGEEDL. Residues 584 to 600 are compositionally biased toward polar residues; it reads FNQQGDPRTTSRGCLVM. Residue Cys-597 is modified to Cysteine methyl ester. A lipid anchor (S-farnesyl cysteine) is attached at Cys-597. A propeptide spans 598 to 600 (removed in mature form); sequence LVM.

The protein belongs to the intermediate filament family. As to quaternary structure, homodimer. Lamin dimers then assemble into dimeric head-to-tail polymers. Ultimately, two head-to-tail polymers assemble laterally into a protofilament with a uniformly shaped rod of 3.5 nm in diameter. In terms of processing, phosphorylation plays a key role in lamin organization, subcellular localization and nuclear envelope disintegration. Phosphorylation by CDK1 at Ser-16 at the onset of mitosis drives lamin disassembly and nuclear envelope breakdown.

Its subcellular location is the nucleus lamina. It is found in the nucleus envelope. The protein localises to the nucleus. It localises to the nucleoplasm. The protein resides in the nucleus matrix. Its function is as follows. Lamins are intermediate filament proteins that assemble into a filamentous meshwork, and which constitute the major components of the nuclear lamina, a fibrous layer on the nucleoplasmic side of the inner nuclear membrane. Lamins provide a framework for the nuclear envelope, bridging the nuclear envelope and chromatin. Plays an important role in nuclear assembly, chromatin organization, nuclear membrane and telomere dynamics. This chain is Lamin-B2 (LMNB2), found in Gallus gallus (Chicken).